A 62-amino-acid chain; its full sequence is Small acidic protein 1 (62 aa).

In terms of assembly, interacts with the COP9 signalosome. As to expression, expressed in roots, flowers, siliques, stems, leaves and seeds. In flowers, detected in petals, anthers and pistils.

Its function is as follows. Mediates responses to the synthetic auxin 2,4-dichlorophenoxyacetic acid (2,4-D). Not involved in the response to indole-3-acetic acid (IAA). Interacts with RUB modification-related components and may regulate the cullin-ring ubiquitin E3 ligase complex (CRL) activity. The protein is Small acidic protein 1 (SMAP1) of Arabidopsis thaliana (Mouse-ear cress).